The primary structure comprises 206 residues: Small ribosomal subunit protein uS4 (206 aa).

Positions 96–156 constitute an S4 RNA-binding domain; the sequence is CRLDNVVYRM…EKSLGQLRIV (61 aa).

It belongs to the universal ribosomal protein uS4 family. As to quaternary structure, part of the 30S ribosomal subunit. Contacts protein S5. The interaction surface between S4 and S5 is involved in control of translational fidelity.

Functionally, one of the primary rRNA binding proteins, it binds directly to 16S rRNA where it nucleates assembly of the body of the 30S subunit. Its function is as follows. With S5 and S12 plays an important role in translational accuracy. The polypeptide is Small ribosomal subunit protein uS4 (Pseudomonas putida (strain ATCC 47054 / DSM 6125 / CFBP 8728 / NCIMB 11950 / KT2440)).